The chain runs to 635 residues: Leucine aminopeptidase 2-2 (635 aa).

Substrate-binding positions include 141–143 and 265–270; these read QCQ and PYGGME. H294 contributes to the Zn(2+) binding site. Catalysis depends on E295, which acts as the Proton acceptor. Zn(2+) is bound by residues H298 and E317. Residue Y399 is the Proton donor of the active site.

Belongs to the peptidase M1 family. Requires Zn(2+) as cofactor.

It localises to the cytoplasm. Its subcellular location is the nucleus. The catalysed reaction is an epoxide + H2O = an ethanediol. Aminopeptidase that preferentially cleaves di- and tripeptides. Also has low epoxide hydrolase activity (in vitro). Can hydrolyze the epoxide leukotriene LTA(4) but it forms preferentially 5,6-dihydroxy-7,9,11,14-eicosatetraenoic acid rather than the cytokine leukotriene B(4) as the product compared to the homologous mammalian enzyme (in vitro). The chain is Leucine aminopeptidase 2-2 (LTA4) from Scheffersomyces stipitis (strain ATCC 58785 / CBS 6054 / NBRC 10063 / NRRL Y-11545) (Yeast).